The sequence spans 599 residues: Elongation factor 4 (599 aa).

In terms of domain architecture, tr-type G spans 2–184; sequence KNIRNFSIIA…RLVRDIPPPE (183 aa). GTP contacts are provided by residues 14-19 and 131-134; these read DHGKST and NKID.

Belongs to the TRAFAC class translation factor GTPase superfamily. Classic translation factor GTPase family. LepA subfamily.

The protein resides in the cell inner membrane. The enzyme catalyses GTP + H2O = GDP + phosphate + H(+). Required for accurate and efficient protein synthesis under certain stress conditions. May act as a fidelity factor of the translation reaction, by catalyzing a one-codon backward translocation of tRNAs on improperly translocated ribosomes. Back-translocation proceeds from a post-translocation (POST) complex to a pre-translocation (PRE) complex, thus giving elongation factor G a second chance to translocate the tRNAs correctly. Binds to ribosomes in a GTP-dependent manner. The sequence is that of Elongation factor 4 from Escherichia coli (strain UTI89 / UPEC).